Here is a 198-residue protein sequence, read N- to C-terminus: MSRYTGSLWKVSRRLNYSVSETGKELHKRAYGPGQHGQKKVKLSDYGFQLQEKQKLRFTYGVSEKQFRKTFDNASKLKGIHGEMFLVLLESRLDNVVYRLGFAKTRAQARQLVNHGHILVDGKKVDIASYRLKPGQTVTLREKSKNLNIVQEALNSKFVRADYVSLDKELVGKYVRYPQRNEFLPDINEQLIVEYYNR.

The region spanning 91 to 154 (SRLDNVVYRL…KNLNIVQEAL (64 aa)) is the S4 RNA-binding domain.

This sequence belongs to the universal ribosomal protein uS4 family. As to quaternary structure, part of the 30S ribosomal subunit. Contacts protein S5. The interaction surface between S4 and S5 is involved in control of translational fidelity.

Functionally, one of the primary rRNA binding proteins, it binds directly to 16S rRNA where it nucleates assembly of the body of the 30S subunit. In terms of biological role, with S5 and S12 plays an important role in translational accuracy. This is Small ribosomal subunit protein uS4 from Aster yellows witches'-broom phytoplasma (strain AYWB).